Consider the following 115-residue polypeptide: uncharacterized protein (115 aa).

Helical transmembrane passes span 10–30 (IAIL…SFWL), 47–67 (ASGI…ATVA), and 77–97 (VHFF…AIIV).

The protein localises to the cell membrane. This is an uncharacterized protein from Mycoplasma genitalium (strain ATCC 33530 / DSM 19775 / NCTC 10195 / G37) (Mycoplasmoides genitalium).